The chain runs to 358 residues: Peptide chain release factor 1 (358 aa).

Gln-233 carries the post-translational modification N5-methylglutamine.

The protein belongs to the prokaryotic/mitochondrial release factor family. In terms of processing, methylated by PrmC. Methylation increases the termination efficiency of RF1.

It is found in the cytoplasm. Functionally, peptide chain release factor 1 directs the termination of translation in response to the peptide chain termination codons UAG and UAA. This is Peptide chain release factor 1 from Agathobacter rectalis (strain ATCC 33656 / DSM 3377 / JCM 17463 / KCTC 5835 / VPI 0990) (Eubacterium rectale).